The chain runs to 464 residues: Centrosomal protein of 55 kDa (464 aa).

The segment covering 1 to 11 has biased composition (basic and acidic residues); that stretch reads MSSRSTKDLIK. Positions 1–26 are disordered; sequence MSSRSTKDLIKSKWGSKPSNSKSETT. 3 coiled-coil regions span residues 22-186, 238-337, and 374-403; these read KSET…QWLV, NDLL…FLYT, and QHQL…LHEF. Position 96 is a phosphoserine (serine 96). The tract at residues 157 to 236 is interaction with TSG101; sequence PNCFNSSINN…GYLQEEKQKC (80 aa). The tract at residues 160 to 214 is interaction with PDCD6IP; the sequence is FNSSINNIHEMEIQLKDALEKNQQWLVYDQQREVYVKGLLAKIFELEKKTETAAH. Positions 355 to 464 are required for localization to the interphase centrosome and to the midbody during cytokinesis; that stretch reads QMQACTLDFE…LLVHVEYCSK (110 aa). Phosphoserine; by CDK1 and MAPK1 occurs at positions 425 and 428. The residue at position 430 (threonine 430) is a Phosphothreonine. Serine 436 carries the post-translational modification Phosphoserine; by PLK1.

As to quaternary structure, homodimer. Interacts (phosphorylated on Ser-425 and Ser-428) with PLK1; the interaction is indirect via the MTMR3:MTMR4 heterooligomer, occurs during early mitosis, regulates the phosphorylation of CEP55 by PLK1 and its recruitment to the midbody where it can mediate cell abscission. Interacts with AKAP9/CG-NAP; the interaction occurs in interphase and is lost upon mitotic entry. Interacts with PCNT/Kendrin; the interaction occurs in interphase and is lost upon mitotic entry. Directly interacts with PDCD6IP; this interaction is required for PDCD6IP targeting to the midbody; CEP55 binds PDCD6IP in a 2:1 stoichiometry; PDCD6IP competes with TSG101 for the same binding site. Interacts with TSG101; TSG101 competes with PDCD6IP for the same binding site; interaction is required for cytokinesis but not for viral budding. Interacts with MVB12A, VPS37B, VPS37C and VPS28. There is a hierachy of phosphorylation, where both Ser-425 and Ser-428 are phosphorylated at the onset of mitosis, prior to Ser-436. Phosphorylation at Ser-425 and Ser-428 is required for dissociation from the centrosome at the G2/M boundary. Phosphorylation at the 3 sites, Ser-425, Ser-428 and Ser-436, is required for protein function at the final stages of cell division to complete cytokinesis successfully. As to expression, expressed in embryonic brain. Expressed in fetal brain ganglionic eminence, kidney tubules and multinucleate neurons in the temporal cortex. Expressed in adult brain, cerebellum, kidney tubules, intestine and muscles (at protein level). Widely expressed, mostly in proliferative tissues. Highly expressed in testis. Intermediate levels in adult and fetal thymus, as well as in various cancer cell lines. Low levels in different parts of the digestive tract, bone marrow, lymph nodes, placenta, fetal heart and fetal spleen. Hardly detected in brain.

The protein resides in the cytoplasm. Its subcellular location is the cytoskeleton. It is found in the microtubule organizing center. It localises to the centrosome. The protein localises to the centriole. The protein resides in the cleavage furrow. Its subcellular location is the midbody. It is found in the midbody ring. Plays a role in mitotic exit and cytokinesis. Recruits PDCD6IP and TSG101 to midbody during cytokinesis. Required for successful completion of cytokinesis. Not required for microtubule nucleation. Plays a role in the development of the brain and kidney. This chain is Centrosomal protein of 55 kDa, found in Homo sapiens (Human).